Reading from the N-terminus, the 76-residue chain is Conotoxin Gla(1)-TxVI (76 aa).

Positions 1 to 19 are cleaved as a signal peptide; the sequence is MEKLTILLLVAAVLMSTQA. Residues 20–45 constitute a propeptide that is removed on maturation; the sequence is LVERAGENHSKENINFLLKRKRAADR. A 6'-bromotryptophan modification is found at Trp48. Glu50 carries the post-translational modification 4-carboxyglutamate. 3 disulfide bridges follow: Cys51–Cys65, Cys58–Cys69, and Cys64–Cys73. A 4-hydroxyproline modification is found at Pro61. A 4-carboxyglutamate mark is found at Glu63, Glu67, and Glu70. Trp76 is modified (6'-bromotryptophan).

As to expression, expressed by the venom duct.

The protein localises to the secreted. This Conus textile (Cloth-of-gold cone) protein is Conotoxin Gla(1)-TxVI.